The primary structure comprises 463 residues: Na(+)/H(+) antiporter NhaA 3 (463 aa).

The next 11 helical transmembrane spans lie at Phe28–Leu48, Leu79–Ile99, Ile114–Val134, Gly144–Gly164, Leu173–Phe193, Asp196–Leu216, Leu232–Val252, Val305–Val325, Val344–Ile364, Tyr377–Ile397, and Ile413–Leu433. A disordered region spans residues Thr444–Lys463. A compositionally biased stretch (pro residues) spans Pro449–Lys463.

The protein belongs to the NhaA Na(+)/H(+) (TC 2.A.33) antiporter family.

The protein localises to the cell membrane. The catalysed reaction is Na(+)(in) + 2 H(+)(out) = Na(+)(out) + 2 H(+)(in). Its function is as follows. Na(+)/H(+) antiporter that extrudes sodium in exchange for external protons. The chain is Na(+)/H(+) antiporter NhaA 3 from Frankia alni (strain DSM 45986 / CECT 9034 / ACN14a).